Here is a 495-residue protein sequence, read N- to C-terminus: Cysteine--tRNA ligase (495 aa).

C29 serves as a coordination point for Zn(2+). The 'HIGH' region signature appears at 31–41 (VTVYDDSHVGH). Zn(2+) contacts are provided by C209, H234, and E238. The 'KMSKS' region motif lies at 266–270 (KMSKS). Position 269 (K269) interacts with ATP.

This sequence belongs to the class-I aminoacyl-tRNA synthetase family. In terms of assembly, monomer. Requires Zn(2+) as cofactor.

The protein resides in the cytoplasm. The enzyme catalyses tRNA(Cys) + L-cysteine + ATP = L-cysteinyl-tRNA(Cys) + AMP + diphosphate. The protein is Cysteine--tRNA ligase (cysS) of Aquifex aeolicus (strain VF5).